The chain runs to 411 residues: NADH-quinone oxidoreductase subunit H (411 aa).

Helical transmembrane passes span Leu18–Ile38, Trp84–Ile104, Leu124–Leu144, Val165–Thr185, Thr198–Glu218, Val260–Ile280, Trp288–Leu308, Met321–Ile341, and Ala352–Gly372.

Belongs to the complex I subunit 1 family. As to quaternary structure, NDH-1 is composed of 14 different subunits. Subunits NuoA, H, J, K, L, M, N constitute the membrane sector of the complex.

It localises to the cell membrane. The catalysed reaction is a quinone + NADH + 5 H(+)(in) = a quinol + NAD(+) + 4 H(+)(out). Functionally, NDH-1 shuttles electrons from NADH, via FMN and iron-sulfur (Fe-S) centers, to quinones in the respiratory chain. The immediate electron acceptor for the enzyme in this species is believed to be menaquinone. Couples the redox reaction to proton translocation (for every two electrons transferred, four hydrogen ions are translocated across the cytoplasmic membrane), and thus conserves the redox energy in a proton gradient. This subunit may bind ubiquinone. This chain is NADH-quinone oxidoreductase subunit H, found in Mycolicibacterium vanbaalenii (strain DSM 7251 / JCM 13017 / BCRC 16820 / KCTC 9966 / NRRL B-24157 / PYR-1) (Mycobacterium vanbaalenii).